The chain runs to 311 residues: MTKRESNTLAVLGCGMVFLVSLLDLANRLLGALGTAILSGILASMADQTADDSGRLFTNFTACVRRKETGAAVSDKISSHANANKVEILNKENLRGVKQADAVLLACQTHLYKALFDEPGMREALKKKLIISVLAGVTTAQLEAALGNGEDYFVIRAMPNIACFVRDSATVIEKPQRTFPEALLHVTDTVFKAVGNVFYIQPSAYDICTALCGSSPAFLAVFIDSMVDGAVAMGLSHKDAVDMAACTMRGAASLVLESGNPWTIRHQVASPGGSTMQGLLALEQGNVRSTISNALMVAAKEAKKLGSKENA.

An N-terminal signal peptide occupies residues 1–31 (MTKRESNTLAVLGCGMVFLVSLLDLANRLLG). Asn-59 carries N-linked (GlcNAc...) asparagine glycosylation.

This sequence belongs to the pyrroline-5-carboxylate reductase family.

The protein operates within secondary metabolite biosynthesis. In terms of biological role, delta-1-pyrroline-5-carboxylate reductase; part of the gene cluster that mediates the biosynthesis of KK-1, a novel cyclic depsipeptide with 10 residues which is a promising active compound with high activity against many plant pathogens, especially Botrytis cinerea. Within the pathway, kk1I catalyzes the synthesis of the L-pipecolic acid residue of KK-1 from delta-1-pyrroline-5-carboxylate (P5C), a metabolic intermediate of lysine. The nonribosomal peptide synthetase (NRPS) kk1B catalyzes the elongation and cyclization of the decapeptide chain composed of 1 D-lactic acid residue (D-Lac), 1 pipecolic acid residue (Pip), 1 aspartic acid residue (Asp), 1 isoleucine residue (Ile), 1 glycine residue (Gly), 1 tyrosine residue (Tyr) and 4 valine residues (Val). The Asp, Ile and 3 Val residues are N-methylated by the 5 methyltransferase domains from the NRPS (found in modules 3, 5, 6, 7 and 9), whereas the Tyr residue is O-methylated by the cluster encoded O-methyltransferase kk1A. The thioesterase kk1J is likely to be involved in the corrective mechanism of peptide chain synthesis. The D-lactate dehydrogenase kk1H is involved in the synthesis of D-lactic acid from pyruvic acid, which is recognized by the A domain of the first kk1B module. The pyrroline-5-carboxylate reductase kk1I is involved in the synthesis of the L-pipecolic acid residue of KK-1 from delta-1-pyrroline-5-carboxylate (P5C), a metabolic intermediate of lysine. It still is unclear how kk1C and kk1D are involved in the production of KK-1. The sequence is that of Delta-1-pyrroline-5-carboxylate reductase kk1I from Curvularia clavata.